The primary structure comprises 652 residues: Phosphatidylinositol-binding clathrin assembly protein (652 aa).

Serine 2 is modified (N-acetylserine). In terms of domain architecture, ENTH spans 14–145 (QHSVTGSAVS…VSYRQVAFDF (132 aa)). Phosphoserine occurs at positions 16 and 20. The interaction with PIMREG stretch occupies residues 221–294 (KYFDMKKNQC…LEGKKIKDST (74 aa)). Lysine 238 participates in a covalent cross-link: Glycyl lysine isopeptide (Lys-Gly) (interchain with G-Cter in SUMO2). Residues serine 303 and serine 315 each carry the phosphoserine modification. The disordered stretch occupies residues 559 to 580 (KNDVNWSQPGEKKLTGGSNWQP).

Belongs to the PICALM/SNAP91 family. In terms of assembly, binds to clathrin; involves primarily the C-terminal sequences, but the full-length protein is required for full binding capacity. Binds phosphatidylinositol 4,5- bisphosphate. Interacts with PIMREG; this interaction may change the subcellular location into the nucleus. Interacts with AP2A1 (via its alpha-appendage domain). Interacts (via N-terminus) with VAMP2; VAMP3; VAMP7 and VAMP8 (Via N-terminus). Interacts with LC3/MAP1LC3A. Expressed in all tissues examined.

The protein localises to the cell membrane. Its subcellular location is the membrane. The protein resides in the clathrin-coated pit. It localises to the golgi apparatus. It is found in the cytoplasmic vesicle. The protein localises to the clathrin-coated vesicle. Its subcellular location is the nucleus. In terms of biological role, cytoplasmic adapter protein that plays a critical role in clathrin-mediated endocytosis which is important in processes such as internalization of cell receptors, synaptic transmission or removal of apoptotic cells. Recruits AP-2 and attaches clathrin triskelions to the cytoplasmic side of plasma membrane leading to clathrin-coated vesicles (CCVs) assembly. Furthermore, regulates clathrin-coated vesicle size and maturation by directly sensing and driving membrane curvature. In addition to binding to clathrin, mediates the endocytosis of small R-SNARES (Soluble NSF Attachment Protein REceptors) between plasma membranes and endosomes including VAMP2, VAMP3, VAMP4, VAMP7 or VAMP8. In turn, PICALM-dependent SNARE endocytosis is required for the formation and maturation of autophagic precursors. Modulates thereby autophagy and the turnover of autophagy substrates such as MAPT/TAU or amyloid precursor protein cleaved C-terminal fragment (APP-CTF). The polypeptide is Phosphatidylinositol-binding clathrin assembly protein (PICALM) (Homo sapiens (Human)).